A 230-amino-acid polypeptide reads, in one-letter code: uncharacterized protein (230 aa).

The protein belongs to the transferase hexapeptide repeat family.

This is an uncharacterized protein from Escherichia coli (strain K12).